The primary structure comprises 715 residues: Protein sneaky (715 aa).

The Cytoplasmic portion of the chain corresponds to 1 to 32; the sequence is MLSLLTRPFLPIFCFLYGPQSEGSTRIQCLRR. The helical transmembrane segment at 33–53 threads the bilayer; sequence FVTFLLGLVLGFLLWKLAALN. Topologically, residues 54-66 are extracellular; it reads FTLGRLFVNGATD. The chain crosses the membrane as a helical span at residues 67–87; sequence LYVFIIFVLVTGTIFMLSLPV. Over 88–109 the chain is Cytoplasmic; it reads RAVILLIFVALVGKSGRTYLRA. Residues 110–130 traverse the membrane as a helical segment; it reads VAFAFIISGPIANLVENAGEV. The Extracellular portion of the chain corresponds to 131–373; it reads ARVFVCTTVL…FERQKRIFNK (243 aa). Residues 374–394 form a helical membrane-spanning segment; it reads VMGILQKILCLFMLRMVYVSI. At 395–457 the chain is on the cytoplasmic side; that stretch reads NYYVKYLNDV…FSRTHHESTT (63 aa). Residues 458 to 478 traverse the membrane as a helical segment; sequence VCFNLLQFLLELVTAGLFILI. The Extracellular segment spans residues 479 to 553; it reads DHLVVELLQI…NAHVLPKKMY (75 aa). The helical transmembrane segment at 554 to 574 threads the bilayer; it reads YQLILLYLIIIVLIYQSTTFL. Residues 575–715 are Cytoplasmic-facing; it reads RMRRVICSFF…VEVYTYRKEK (141 aa). The RING-type; degenerate zinc-finger motif lies at 655–691; the sequence is CMICRGLEDSTFTVCGNCGLPYCDDCAEDLNSVCFQC.

In terms of tissue distribution, specifically expressed in testis.

Its subcellular location is the cytoplasmic vesicle. The protein resides in the secretory vesicle. It localises to the acrosome membrane. The protein localises to the cytoplasm. It is found in the cytoplasmic vesicle membrane. In terms of biological role, component of the sperm acrosome membrane. Required for breakdown of the sperm plasma membrane after sperm entry into the egg, which is an essential prerequisite for successful fertilization. The protein is Protein sneaky of Drosophila melanogaster (Fruit fly).